The chain runs to 490 residues: Subtilisin-like protease 8 (490 aa).

An N-terminal signal peptide occupies residues 1 to 26; it reads MKGLLSLSVLPVLAYASPMIVDSIHQ. A propeptide spanning residues 27–134 is cleaved from the precursor; the sequence is NAAPILSSTN…YIERDSEVHT (108 aa). In terms of domain architecture, Inhibitor I9 spans 43-134; the sequence is SYIVVFKKGV…YIERDSEVHT (92 aa). Residues 144 to 450 enclose the Peptidase S8 domain; that stretch reads PWGLARISHR…GGSDDYKKII (307 aa). Catalysis depends on charge relay system residues aspartate 180 and histidine 212. Asparagine 282 carries an N-linked (GlcNAc...) asparagine glycan. Residue serine 378 is the Charge relay system of the active site. Asparagine 456 carries N-linked (GlcNAc...) asparagine glycosylation.

The protein belongs to the peptidase S8 family.

It is found in the secreted. Functionally, secreted subtilisin-like serine protease with keratinolytic activity that contributes to pathogenicity. The sequence is that of Subtilisin-like protease 8 (SUB8) from Arthroderma benhamiae (strain ATCC MYA-4681 / CBS 112371) (Trichophyton mentagrophytes).